Reading from the N-terminus, the 43-residue chain is uncharacterized protein (43 aa).

The interval 1–43 (MFKSRIETGGFQFQVHGDDESAMDDEFIDDDDDQQVVEPVTDN) is disordered. The segment covering 20–35 (ESAMDDEFIDDDDDQQ) has biased composition (acidic residues).

This is an uncharacterized protein from Dictyostelium discoideum (Social amoeba).